Here is a 222-residue protein sequence, read N- to C-terminus: MDSDSWSDRLASASRRYQLDFLSRSDNFLGFEEIEGEDDFREEYACPFCSDYFDIVSLCCHIDEDHPMDAKNGVCPICAVKVSSDMIAHITLQHANMFKVTRKRKSRRGGAQSMLSILKREFPDGNFQSLFEGTSRAVSSSSASIAADPLLSSFISPMADDFFISESSLCADTSSAKKTLNQSLPERNVEKQSLSAEDHREKLKQSEFVQGILSSMILEDGL.

Phosphoserine is present on Ser-116.

It belongs to the Di19 family. Phosphorylated in vitro by CPK3 or CPK11. In terms of tissue distribution, expressed in seedlings, roots, leaves, stems, flowers and siliques.

It localises to the nucleus. This is Protein DEHYDRATION-INDUCED 19 homolog 6 (DI19-6) from Arabidopsis thaliana (Mouse-ear cress).